We begin with the raw amino-acid sequence, 142 residues long: Cell wall-binding protein YqgA (142 aa).

Positions 1–28 (MKQGKFSVFLILLLMLTLVVAPKEKAEA) are cleaved as a signal peptide.

As to quaternary structure, found in a complex with F(1)F(0) ATP synthase and SpoIIIJ and YqjG.

It localises to the secreted. Its subcellular location is the cell wall. This chain is Cell wall-binding protein YqgA (yqgA), found in Bacillus subtilis (strain 168).